The sequence spans 481 residues: Proline--tRNA ligase (481 aa).

The protein belongs to the class-II aminoacyl-tRNA synthetase family. ProS type 3 subfamily. Homodimer.

It localises to the cytoplasm. It carries out the reaction tRNA(Pro) + L-proline + ATP = L-prolyl-tRNA(Pro) + AMP + diphosphate. In terms of biological role, catalyzes the attachment of proline to tRNA(Pro) in a two-step reaction: proline is first activated by ATP to form Pro-AMP and then transferred to the acceptor end of tRNA(Pro). This chain is Proline--tRNA ligase, found in Chlorobaculum tepidum (strain ATCC 49652 / DSM 12025 / NBRC 103806 / TLS) (Chlorobium tepidum).